A 248-amino-acid chain; its full sequence is Killer cell lectin-like receptor subfamily I member 2 (248 aa).

Residues 1-79 (MHKKKHIKHG…GIDPWLTTWQ (79 aa)) are Cytoplasmic-facing. The segment at 19–44 (IGTKSPTFQEKQRPSKTDQRSTVWRE) is disordered. The segment covering 28–44 (EKQRPSKTDQRSTVWRE) has biased composition (basic and acidic residues). A helical; Signal-anchor for type II membrane protein transmembrane segment spans residues 80–100 (MITVILATLCIILVTKVGFLI). The Extracellular segment spans residues 101–248 (PSLFSKGEKQ…KKTYICEFNI (148 aa)). 3 cysteine pairs are disulfide-bonded: C132–C145, C161–C244, and C223–C236. Residues 139-245 (FGNNFYCVFR…CSAKKTYICE (107 aa)) form the C-type lectin domain. N-linked (GlcNAc...) asparagine glycans are attached at residues N197, N214, and N220.

In terms of assembly, heterodimer with KLRE1. Expressed in natural killer (NK) cells.

It localises to the cell membrane. Its function is as follows. Lectin-like receptor for natural killer (NK) cells. Heterodimer formation with KLRE1 mediates NK cell cytolytic activity. The sequence is that of Killer cell lectin-like receptor subfamily I member 2 from Mus musculus (Mouse).